Reading from the N-terminus, the 250-residue chain is Mediator of RNA polymerase II transcription subunit 8 (250 aa).

The segment at 217–250 (SPMSAVSPGAGPLGKMPSGIKTNIKSANQVHPYR) is disordered. Polar residues predominate over residues 236–250 (IKTNIKSANQVHPYR).

It belongs to the Mediator complex subunit 8 family. Component of the Mediator complex.

The protein resides in the nucleus. Functionally, component of the Mediator complex, a coactivator involved in the regulated transcription of nearly all RNA polymerase II-dependent genes. Mediator functions as a bridge to convey information from gene-specific regulatory proteins to the basal RNA polymerase II transcription machinery. Mediator is recruited to promoters by direct interactions with regulatory proteins and serves as a scaffold for the assembly of a functional preinitiation complex with RNA polymerase II and the general transcription factors. In Aedes aegypti (Yellowfever mosquito), this protein is Mediator of RNA polymerase II transcription subunit 8 (MED8).